We begin with the raw amino-acid sequence, 542 residues long: Membrane protein insertase YidC (542 aa).

6 helical membrane-spanning segments follow: residues 6 to 26 (NILL…WQTD), 326 to 346 (LVVD…LLMF), 350 to 370 (FVGN…GMLY), 421 to 441 (GGCL…WVLL), 458 to 478 (LSVQ…MFLM), and 501 to 521 (VIFT…WLVG).

Belongs to the OXA1/ALB3/YidC family. Type 1 subfamily. As to quaternary structure, interacts with the Sec translocase complex via SecD. Specifically interacts with transmembrane segments of nascent integral membrane proteins during membrane integration.

The protein localises to the cell inner membrane. In terms of biological role, required for the insertion and/or proper folding and/or complex formation of integral membrane proteins into the membrane. Involved in integration of membrane proteins that insert both dependently and independently of the Sec translocase complex, as well as at least some lipoproteins. Aids folding of multispanning membrane proteins. The sequence is that of Membrane protein insertase YidC from Shewanella loihica (strain ATCC BAA-1088 / PV-4).